A 188-amino-acid chain; its full sequence is Elongation factor P (188 aa).

An N6-(3,6-diaminohexanoyl)-5-hydroxylysine modification is found at lysine 34.

Belongs to the elongation factor P family. May be beta-lysylated on the epsilon-amino group of Lys-34 by the combined action of EpmA and EpmB, and then hydroxylated on the C5 position of the same residue by EpmC (if this protein is present). Lysylation is critical for the stimulatory effect of EF-P on peptide-bond formation. The lysylation moiety may extend toward the peptidyltransferase center and stabilize the terminal 3-CCA end of the tRNA. Hydroxylation of the C5 position on Lys-34 may allow additional potential stabilizing hydrogen-bond interactions with the P-tRNA.

The protein localises to the cytoplasm. Its pathway is protein biosynthesis; polypeptide chain elongation. Involved in peptide bond synthesis. Alleviates ribosome stalling that occurs when 3 or more consecutive Pro residues or the sequence PPG is present in a protein, possibly by augmenting the peptidyl transferase activity of the ribosome. Modification of Lys-34 is required for alleviation. This is Elongation factor P from Photorhabdus laumondii subsp. laumondii (strain DSM 15139 / CIP 105565 / TT01) (Photorhabdus luminescens subsp. laumondii).